A 117-amino-acid polypeptide reads, in one-letter code: Ribonuclease P protein component (117 aa).

The protein belongs to the RnpA family. Consists of a catalytic RNA component (M1 or rnpB) and a protein subunit.

The enzyme catalyses Endonucleolytic cleavage of RNA, removing 5'-extranucleotides from tRNA precursor.. In terms of biological role, RNaseP catalyzes the removal of the 5'-leader sequence from pre-tRNA to produce the mature 5'-terminus. It can also cleave other RNA substrates such as 4.5S RNA. The protein component plays an auxiliary but essential role in vivo by binding to the 5'-leader sequence and broadening the substrate specificity of the ribozyme. In Aliivibrio salmonicida (strain LFI1238) (Vibrio salmonicida (strain LFI1238)), this protein is Ribonuclease P protein component.